The primary structure comprises 696 residues: Putative zinc metalloproteinase YIL108W (696 aa).

Residue K245 forms a Glycyl lysine isopeptide (Lys-Gly) (interchain with G-Cter in ubiquitin) linkage. H318 is a Zn(2+) binding site. Residue E319 is part of the active site. Residues H322 and H328 each contribute to the Zn(2+) site. S361 is modified (phosphoserine). Glycyl lysine isopeptide (Lys-Gly) (interchain with G-Cter in ubiquitin) cross-links involve residues K478, K518, K579, K590, and K596. Residues 522 to 695 (GIKSPLYGRS…VDAFGIIYGA (174 aa)) enclose the Jacalin-type lectin domain.

The protein belongs to the peptidase M10B family. Zn(2+) is required as a cofactor.

The protein resides in the cytoplasm. The sequence is that of Putative zinc metalloproteinase YIL108W from Saccharomyces cerevisiae (strain ATCC 204508 / S288c) (Baker's yeast).